Consider the following 519-residue polypeptide: Glycerophosphoinositol permease 1 (519 aa).

The segment at 1 to 32 is disordered; it reads MSDLVKSSEVIETTEVPPHNNNNNKRHFKYDS. The chain crosses the membrane as a helical span at residues 39-59; it reads LAGGVKLKDALMILCAGFALI. The N-linked (GlcNAc...) asparagine glycan is linked to asparagine 93. The next 3 helical transmembrane spans lie at 94 to 114, 117 to 137, and 141 to 161; these read ASLV…DYIG, WSIV…AASH, and VNGM…GIGA. Asparagine 175 is a glycosylation site (N-linked (GlcNAc...) asparagine). The next 8 helical transmembrane spans lie at 186–206, 216–236, 273–293, 313–333, 337–357, 363–383, 404–424, and 432–452; these read ILAT…IFLI, DAIW…VFYF, VAWF…AGII, LLLG…VDIL, YTMM…GCGY, ITGL…FGPG, GISA…FSPI, and WTFI…FIFI. Acidic residues predominate over residues 487–500; it reads EEEDLEGSSEDSSD. Residues 487–519 are disordered; it reads EEEDLEGSSEDSSDGEIVKNNTKNDVEKVDALK. The N-linked (GlcNAc...) asparagine glycan is linked to asparagine 506. The span at 508 to 519 shows a compositional bias: basic and acidic residues; sequence TKNDVEKVDALK.

The protein belongs to the major facilitator superfamily. Sugar transporter (TC 2.A.1.1) family.

The protein localises to the cell membrane. The enzyme catalyses sn-glycero-3-phospho-1D-myo-inositol(out) = sn-glycero-3-phospho-1D-myo-inositol(in). In terms of biological role, glycerophosphodiester transporter that mediates uptake of glycerophosphoinositol (GroPIns) as a source of inositol and phosphate. Does not possess detectable glycerophosphocholine (GroPCho) transport activity. Although no glycerophosphoinositol transport activity occurs in the absence of GIT1, C.albicans is still able to use glycerophosphoinositol as a phosphate source at pH 7.5, albeit slowly. Thus, a second, GIT1-independent, mechanism must exist for utilizing glycerophosphoinositol as a phosphate source at physiological pH. The expanded ability to utilize GroPIns and GroPCho results from the organism's pathogenic nature and its need to occupy a variety of environments within its host organism. This possibility is buttressed by the fact that GroPIns and GroPCho are present and abundant in human fluids. This chain is Glycerophosphoinositol permease 1, found in Candida albicans (strain SC5314 / ATCC MYA-2876) (Yeast).